Here is a 317-residue protein sequence, read N- to C-terminus: UV DNA damage endonuclease (317 aa).

This sequence belongs to the uve1/UvsE family.

Functionally, component in a DNA repair pathway. Removal of UV LIGHT damaged nucleotides. Recognizes pyrimidine dimers and cleave a phosphodiester bond immediately 5' to the lesion. This is UV DNA damage endonuclease from Bacillus cereus (strain Q1).